The sequence spans 325 residues: ATP phosphoribosyltransferase (325 aa).

It belongs to the ATP phosphoribosyltransferase family. Long subfamily. The cofactor is Mg(2+).

The protein localises to the cytoplasm. The catalysed reaction is 1-(5-phospho-beta-D-ribosyl)-ATP + diphosphate = 5-phospho-alpha-D-ribose 1-diphosphate + ATP. It participates in amino-acid biosynthesis; L-histidine biosynthesis; L-histidine from 5-phospho-alpha-D-ribose 1-diphosphate: step 1/9. With respect to regulation, feedback inhibited by histidine. In terms of biological role, catalyzes the condensation of ATP and 5-phosphoribose 1-diphosphate to form N'-(5'-phosphoribosyl)-ATP (PR-ATP). Has a crucial role in the pathway because the rate of histidine biosynthesis seems to be controlled primarily by regulation of HisG enzymatic activity. This chain is ATP phosphoribosyltransferase, found in Bradyrhizobium diazoefficiens (strain JCM 10833 / BCRC 13528 / IAM 13628 / NBRC 14792 / USDA 110).